We begin with the raw amino-acid sequence, 600 residues long: Glutamine--fructose-6-phosphate aminotransferase [isomerizing] (600 aa).

Cys2 serves as the catalytic Nucleophile; for GATase activity. The Glutamine amidotransferase type-2 domain occupies 2-217 (CGIVGFIGEQ…DKEIVIVTKE (216 aa)). SIS domains lie at 283–422 (IRNA…AKGE) and 452–590 (LAKQ…VDKP). The For Fru-6P isomerization activity role is filled by Lys595.

As to quaternary structure, homodimer.

The protein localises to the cytoplasm. The enzyme catalyses D-fructose 6-phosphate + L-glutamine = D-glucosamine 6-phosphate + L-glutamate. In terms of biological role, catalyzes the first step in hexosamine metabolism, converting fructose-6P into glucosamine-6P using glutamine as a nitrogen source. This is Glutamine--fructose-6-phosphate aminotransferase [isomerizing] from Bacillus cereus (strain ATCC 14579 / DSM 31 / CCUG 7414 / JCM 2152 / NBRC 15305 / NCIMB 9373 / NCTC 2599 / NRRL B-3711).